Here is a 149-residue protein sequence, read N- to C-terminus: 3-hydroxyacyl-[acyl-carrier-protein] dehydratase FabZ (149 aa).

Histidine 50 is an active-site residue.

This sequence belongs to the thioester dehydratase family. FabZ subfamily.

It localises to the cytoplasm. The catalysed reaction is a (3R)-hydroxyacyl-[ACP] = a (2E)-enoyl-[ACP] + H2O. In terms of biological role, involved in unsaturated fatty acids biosynthesis. Catalyzes the dehydration of short chain beta-hydroxyacyl-ACPs and long chain saturated and unsaturated beta-hydroxyacyl-ACPs. The chain is 3-hydroxyacyl-[acyl-carrier-protein] dehydratase FabZ from Pediococcus pentosaceus (strain ATCC 25745 / CCUG 21536 / LMG 10740 / 183-1w).